A 579-amino-acid polypeptide reads, in one-letter code: Putative diflavin flavoprotein A 2 (579 aa).

Residues Gln50 to His243 form a zinc metallo-hydrolase region. The Fe cation site is built by His99, Glu101, Asp103, His166, Asp185, and His243. Residues Val272 to Ser460 form the Flavodoxin-like domain. The tract at residues Leu461 to Tyr579 is flavodoxin-reductase-like.

The protein in the N-terminal section; belongs to the zinc metallo-hydrolase group 3 family. In the C-terminal section; belongs to the flavodoxin reductase family. It depends on Fe cation as a cofactor.

Its function is as follows. Mediates electron transfer from NADH to oxygen, reducing it to water. This modular protein has 3 redox cofactors, in other organisms the same activity requires 2 or 3 proteins. This Nostoc sp. (strain PCC 7120 / SAG 25.82 / UTEX 2576) protein is Putative diflavin flavoprotein A 2 (dfa2).